A 280-amino-acid chain; its full sequence is uncharacterized protein (280 aa).

Disordered stretches follow at residues M1–Q83 and I248–L280. Positions S12–P25 are enriched in polar residues. Basic and acidic residues-rich tracts occupy residues K41–D71 and R249–L280.

Belongs to the chlamydial CPn_0705/CT_671/TC_0042 family.

This is an uncharacterized protein from Chlamydia pneumoniae (Chlamydophila pneumoniae).